A 335-amino-acid polypeptide reads, in one-letter code: Methionine import ATP-binding protein MetN (335 aa).

The region spanning 2–241 is the ABC transporter domain; that stretch reads IQFQRLHKSY…PKHATTRRFV (240 aa). Position 38–45 (38–45) interacts with ATP; sequence GHSGAGKS.

Belongs to the ABC transporter superfamily. Methionine importer (TC 3.A.1.24) family. The complex is composed of two ATP-binding proteins (MetN), two transmembrane proteins (MetI) and a solute-binding protein (MetQ).

It is found in the cell inner membrane. The catalysed reaction is L-methionine(out) + ATP + H2O = L-methionine(in) + ADP + phosphate + H(+). The enzyme catalyses D-methionine(out) + ATP + H2O = D-methionine(in) + ADP + phosphate + H(+). Part of the ABC transporter complex MetNIQ involved in methionine import. Responsible for energy coupling to the transport system. This Xanthomonas euvesicatoria pv. vesicatoria (strain 85-10) (Xanthomonas campestris pv. vesicatoria) protein is Methionine import ATP-binding protein MetN.